We begin with the raw amino-acid sequence, 807 residues long: Centrosomal protein of 97 kDa (807 aa).

7 LRR repeats span residues 34-55 (DTQT…EKCR), 56-77 (NLVQ…AKLI), 78-99 (HLRV…KDLV), 100-121 (HLEW…NSST), 122-143 (SLQH…SKLK), 144-165 (SLKT…SACL), and 168-189 (SLTI…AFLA). The LRRCT domain occupies 208-246 (TPSIPGFDYRPFIVSWCLNLKVLDGYVVSQKESLKAEWL). Residues 306-330 (RSDGYLTSSTPNKRLPLSTEHHSPT) form a disordered region. Residues 519–548 (ISKAATKLQSCWRGFYARKYNPKVKDVCYE) form the IQ domain. The segment covering 607–623 (TANSSENDLPSASNSKH) has biased composition (polar residues). A disordered region spans residues 607–756 (TANSSENDLP…RPEITTCSDN (150 aa)). Over residues 681-690 (TGRHYNDKVP) the composition is skewed to basic and acidic residues. Residues 704-724 (SQSSKDSFTSEQDSSLLQQYL) show a composition bias toward polar residues.

Its subcellular location is the cytoplasm. It is found in the cytoskeleton. The protein localises to the microtubule organizing center. It localises to the centrosome. Its function is as follows. Acts as a key negative regulator of ciliogenesis in collaboration with ccp110 by capping the mother centriole thereby preventing cilia formation. Required for recruitment of ccp110 to the centrosome. The protein is Centrosomal protein of 97 kDa (cep97) of Xenopus laevis (African clawed frog).